We begin with the raw amino-acid sequence, 95 residues long: uncharacterized protein (95 aa).

Residues 27–47 (SFGLAIIGILLIACEIILFLT) traverse the membrane as a helical segment.

The protein resides in the membrane. This is an uncharacterized protein from Homo sapiens (Human).